We begin with the raw amino-acid sequence, 242 residues long: Pyr4-family terpene cyclase mfmH (242 aa).

4 helical membrane passes run 25 to 45 (VQDG…ILYI), 55 to 75 (GMPL…GAAI), 80 to 100 (AQVV…YTTW), and 116 to 136 (NLGW…WAFL). N-linked (GlcNAc...) asparagine glycosylation is present at Asn-170. The next 2 helical transmembrane spans lie at 175–195 (SWGI…IFVW) and 211–231 (VTIF…FVYA).

This sequence belongs to the paxB family.

It is found in the membrane. It participates in secondary metabolite biosynthesis; terpenoid biosynthesis. Its function is as follows. Terpene cyclase; part of the gene cluster that mediates the biosynthesis of the phthalide-terpenoid hybrid 11'-O-desmethylfendlerol. Within the pathway, mfmH catalyzes the last step and cyclizes the prenyl unit of 5-O-farnesylcyclopolic acid into a drimane-like structure to yield 11'-O-desmethylfendlerol. The biosynthesis of 11'-O-desmethylfendlerol begins with the NR-PKS mfmB that forms 3,5-dimethylorsellinic acid (DMOA), which is then transformed into the phthalide 5,7-dihydroxy-4-(hydroxymethyl)-6-methylphthalide by the cytochrome P450 monooxygenase mfmA and the hydrolase mfmC. Subsequently, the methyltransferase mfmE catalyzes 7-O-methylation to yield 5-hydroxy-4-(hydroxymethyl)-7-methoxy-6-methylphthalide, which undergoes C-3 hydroxylation by the cytochrome P450 monooxygenase mfmF. The resultant cyclopolic acid (2,5-dihydroxy-4-(hydroxymethyl)-7-methoxy-6-methylphthalide) is then farnesylated by the DMATS-type prenyltransferase mfmD to afford 5-O-farnesylcyclopolic acid. Finally, the Pyr4-family terpene cyclase mfmH cyclizes the farnesyl moiety of 5-O-farnesylcyclopolic acid into a drimane-like structure, thus completing the biosynthesis of 11'-O-desmethylfendlerol. This Annulohypoxylon moriforme (Filamentous fungus) protein is Pyr4-family terpene cyclase mfmH.